A 386-amino-acid polypeptide reads, in one-letter code: Probable pectin lyase E (386 aa).

The N-terminal stretch at 1–16 (MKTAVLSLFLALQTYA) is a signal peptide. A disulfide bridge links Cys-77 with Cys-101. A glycan (N-linked (GlcNAc...) asparagine) is linked at Asn-124. Arg-251 is an active-site residue. Residues Cys-326 and Cys-334 are joined by a disulfide bond.

It belongs to the polysaccharide lyase 1 family.

It is found in the secreted. It catalyses the reaction Eliminative cleavage of (1-&gt;4)-alpha-D-galacturonan methyl ester to give oligosaccharides with 4-deoxy-6-O-methyl-alpha-D-galact-4-enuronosyl groups at their non-reducing ends.. In terms of biological role, pectinolytic enzymes consist of four classes of enzymes: pectin lyase, polygalacturonase, pectin methylesterase and rhamnogalacturonase. Among pectinolytic enzymes, pectin lyase is the most important in depolymerization of pectin, since it cleaves internal glycosidic bonds of highly methylated pectins. The polypeptide is Probable pectin lyase E (pelE) (Aspergillus fumigatus (strain CBS 144.89 / FGSC A1163 / CEA10) (Neosartorya fumigata)).